A 278-amino-acid polypeptide reads, in one-letter code: Sulfur carrier protein FdhD (278 aa).

The active-site Cysteine persulfide intermediate is the Cys121. Mo-bis(molybdopterin guanine dinucleotide) is bound at residue 260 to 265 (FCKPGR).

The protein belongs to the FdhD family.

The protein resides in the cytoplasm. Functionally, required for formate dehydrogenase (FDH) activity. Acts as a sulfur carrier protein that transfers sulfur from IscS to the molybdenum cofactor prior to its insertion into FDH. The protein is Sulfur carrier protein FdhD of Salmonella typhi.